The chain runs to 405 residues: MNHLPMPTFGPLAGVRVVFSGIEIAAPFAGQMFAEWGAEVIWIENVAWADTIRVQPNYPQLSRRNLHALSLNIFKDEGREAFLKLMETTDIFIEASKGPAFARRGITDEVLWEHNPKLVIAHLSGFGQYGTEEYTNLPAYNTIAQAFSGYLIQNGDVDQPMPPFPYTADYFSGMTATTAALAALHKVRETGKGESIDIAMYEVMLRMGQYFMMDYFNGGEICPRMTKGKDPYYAGCGLYKCADGYIVMELVGITQINECFKDIGLAHILGTPEAPEGTQLIHRVECPYGPLVEEKLDAWLATHTIAEVQARFAELNIACAKVLTIPELEGNPQYVARESITQWQTMDGRTCKGPNIMPKFKNNPGKIWRGMPSHGMDTAAILKNIGYSEADIKELVGKGLAKVED.

Positions 97 and 104 each coordinate CoA. Residue aspartate 169 is the Nucleophile of the active site.

Belongs to the CoA-transferase III family. CaiB subfamily. Homodimer.

Its subcellular location is the cytoplasm. It catalyses the reaction crotonobetainyl-CoA + (R)-carnitine = crotonobetaine + (R)-carnitinyl-CoA. The catalysed reaction is 4-(trimethylamino)butanoyl-CoA + (R)-carnitine = (R)-carnitinyl-CoA + 4-(trimethylamino)butanoate. The protein operates within amine and polyamine metabolism; carnitine metabolism. Functionally, catalyzes the reversible transfer of the CoA moiety from gamma-butyrobetainyl-CoA to L-carnitine to generate L-carnitinyl-CoA and gamma-butyrobetaine. Is also able to catalyze the reversible transfer of the CoA moiety from gamma-butyrobetainyl-CoA or L-carnitinyl-CoA to crotonobetaine to generate crotonobetainyl-CoA. The sequence is that of L-carnitine CoA-transferase from Salmonella gallinarum (strain 287/91 / NCTC 13346).